A 423-amino-acid polypeptide reads, in one-letter code: MSKKKLQTIQAPKGVPDYIPPVSPEFLGVRDTFAHQAHLAGYEHIELPIFEDTTLFARGVGESTDVVTKEMYTFADRGDRSVTLRPEGTAGVMRAVIEHNLDRGQLPVKLNYYGPFFRYERPQAGRYRQLQQVGVEAIGVDDPALDAEVIALADRSLKVIGLTGYRLELTSLGDHTCRPQYREKLQEFLFKLPLDEETRHRAEINPLRVLDDKRPEIQEMTVDAPLMLDNLSDSSREHFELVTGMLDDLNVAYVVNPRMVRGLDYYTKTTFEFVHDGLGAQSGIGGGGRYDGLMAQLGGQELSGIGYALGVDRCLLALEAEQKRVTDGSRVNVFGVAMGSAAKREMVRIIDALRSAGISADMAYGDRGLKGAMKGADRAGARFALVLGDRELENNCVAVKDLAQQGQRDVSLDNLILEIQSAL.

The protein belongs to the class-II aminoacyl-tRNA synthetase family. In terms of assembly, homodimer.

Its subcellular location is the cytoplasm. It carries out the reaction tRNA(His) + L-histidine + ATP = L-histidyl-tRNA(His) + AMP + diphosphate + H(+). This chain is Histidine--tRNA ligase, found in Corynebacterium diphtheriae (strain ATCC 700971 / NCTC 13129 / Biotype gravis).